The following is a 473-amino-acid chain: Flagellum-specific ATP synthase (473 aa).

187 to 194 provides a ligand contact to ATP; the sequence is AGSGVGKS.

Belongs to the ATPase alpha/beta chains family.

It is found in the cytoplasm. The enzyme catalyses ATP + H2O + 4 H(+)(in) = ADP + phosphate + 5 H(+)(out). Probable catalytic subunit of a protein translocase for flagellum-specific export, or a proton translocase involved in local circuits at the flagellum. The polypeptide is Flagellum-specific ATP synthase (fliI) (Agrobacterium fabrum (strain C58 / ATCC 33970) (Agrobacterium tumefaciens (strain C58))).